Consider the following 175-residue polypeptide: Large ribosomal subunit protein eL14 (175 aa).

Residues 150-175 (KAAKMDSTEGAKRRMQKAIAARKAKK) form a disordered region. Over residues 152–161 (AKMDSTEGAK) the composition is skewed to basic and acidic residues. Basic residues predominate over residues 162-175 (RRMQKAIAARKAKK).

The protein belongs to the eukaryotic ribosomal protein eL14 family.

In terms of biological role, component of the large ribosomal subunit. The ribosome is a large ribonucleoprotein complex responsible for the synthesis of proteins in the cell. In Leishmania donovani, this protein is Large ribosomal subunit protein eL14 (RPL14).